A 233-amino-acid polypeptide reads, in one-letter code: Large ribosomal subunit protein uL1 (233 aa).

The protein belongs to the universal ribosomal protein uL1 family. As to quaternary structure, part of the 50S ribosomal subunit.

Its function is as follows. Binds directly to 23S rRNA. The L1 stalk is quite mobile in the ribosome, and is involved in E site tRNA release. Functionally, protein L1 is also a translational repressor protein, it controls the translation of the L11 operon by binding to its mRNA. The protein is Large ribosomal subunit protein uL1 of Campylobacter curvus (strain 525.92).